The sequence spans 463 residues: MSTMAKSPEANNLHQDVIAQFPILNGYTHTVGAFSQPLNVSRLFIIDEIQTAYDELRVQIPWLAHQVVVVDAGPGKSGYITTAPWPSSAPPNDVTYEEKDDAFPSLNTLIKSGGSFLATKDLVGYPGLPEPHGLHPTPVATIRLVFITGGVLVVLSTHHNIVDGIGLMQMWDYLDILMGGGAISRQDARSANADRARVLPLIAPGEPVKDYSHLIRPNPWPLPPPPKTEWRLFKMHPWALAEIRSRARDGTDQRASARPASSDDALTAFCWQRVSAMRLASGRVTGDQVSKFGRAVNGRSAMGLDSSYLFHMMLHTETRLPIEQIARSTLAELSTQLRKDLDAARTEWSVRSYATFLAGVADKTRLLYGGITNPQTDLGGTSTMHWASRRPIRLGLLGDCHLIRKPEGMPLPGCLYFMPSGGTSGVVQLLLCLPKEELDALQEDAEWKHYTESGGRRVDGPRL.

The protein belongs to the trichothecene 3-O-acetyltransferase family.

Its pathway is mycotoxin biosynthesis. Its function is as follows. O-acetyltransferase; part of the satratoxin SC1 cluster involved in the biosynthesis of satratoxins, trichothecene mycotoxins that are associated with human food poisonings. Satratoxins are suggested to be made by products of multiple gene clusters (SC1, SC2 and SC3) that encode 21 proteins in all, including polyketide synthases, acetyltransferases, and other enzymes expected to modify the trichothecene skeleton. SC1 encodes 10 proteins, SAT1 to SAT10. The largest are SAT8, which encodes a putative polyketide synthase (PKS) with a conventional non-reducing architecture, and SAT10, a putative protein containing four ankyrin repeats and thus may be involved in protein scaffolding. The putative short-chain reductase SAT3 may assist the PKS in some capacity. SAT6 contains a secretory lipase domain and acts probably as a trichothecene esterase. SAT5 encodes a putative acetyltransferase, and so, with SAT6, may affect endogenous protection from toxicity. The probable transcription factor SAT9 may regulate the expression of the SC1 cluster. SC2 encodes proteins SAT11 to SAT16, the largest of which encodes the putative reducing PKS SAT13. SAT11 is a cytochrome P450 monooxygenase, while SAT14 and SAT16 are probable acetyltransferases. The SC2 cluster may be regulated by the transcription factor SAT15. SC3 is a small cluster that encodes 5 proteins, SAT17 to SAT21. SAT21 is a putative MFS-type transporter which may have a role in exporting secondary metabolites. The four other proteins putatively encoded in SC3 include the taurine hydroxylase-like protein SAT17, the O-methyltransferase SAT18, the acetyltransferase SAT19, and the Cys6-type zinc finger SAT20, the latter being probably involved in regulation of SC3 expression. The protein is O-acetyltransferase SAT5 of Stachybotrys chartarum (strain CBS 109288 / IBT 7711) (Toxic black mold).